The following is a 202-amino-acid chain: ER membrane protein complex subunit 7 homolog (202 aa).

The first 23 residues, 1–23 (MAPIFRSTSLIAFSLFFFFFAST), serve as a signal peptide directing secretion. The chain crosses the membrane as a helical span at residues 148–168 (IVKSPMGLMVGFMVVVVFLMP). The disordered stretch occupies residues 179–202 (MKSAQEQMRSQGVPSLTSLLPASR). The span at 182–202 (AQEQMRSQGVPSLTSLLPASR) shows a compositional bias: polar residues.

Belongs to the EMC7 family.

It localises to the membrane. In Arabidopsis thaliana (Mouse-ear cress), this protein is ER membrane protein complex subunit 7 homolog.